The sequence spans 483 residues: Glutamyl-tRNA(Gln) amidotransferase subunit A (483 aa).

Residues K75 and S150 each act as charge relay system in the active site. S174 functions as the Acyl-ester intermediate in the catalytic mechanism.

This sequence belongs to the amidase family. GatA subfamily. Heterotrimer of A, B and C subunits.

It catalyses the reaction L-glutamyl-tRNA(Gln) + L-glutamine + ATP + H2O = L-glutaminyl-tRNA(Gln) + L-glutamate + ADP + phosphate + H(+). Allows the formation of correctly charged Gln-tRNA(Gln) through the transamidation of misacylated Glu-tRNA(Gln) in organisms which lack glutaminyl-tRNA synthetase. The reaction takes place in the presence of glutamine and ATP through an activated gamma-phospho-Glu-tRNA(Gln). This Legionella pneumophila subsp. pneumophila (strain Philadelphia 1 / ATCC 33152 / DSM 7513) protein is Glutamyl-tRNA(Gln) amidotransferase subunit A.